We begin with the raw amino-acid sequence, 150 residues long: Ribonuclease P protein subunit p21 (150 aa).

Position 2 is an N-acetylalanine (alanine 2). The Zn(2+) site is built by cysteine 62, cysteine 65, cysteine 92, and cysteine 95. The interval 121 to 150 (QADINPSEPLPNIADLPKENIQTQALNTSE) is disordered. A compositionally biased stretch (polar residues) spans 140–150 (NIQTQALNTSE).

The protein belongs to the eukaryotic/archaeal RNase P protein component 4 family. RNase P consists of a catalytic RNA moiety and about 10 protein subunits; POP1, POP4, POP5, POP7, RPP14, RPP21, RPP25, RPP30, RPP38 and RPP40. Within the RNase P complex, POP1, POP7 and RPP25 form the 'finger' subcomplex, POP5, RPP14, RPP40 and homodimeric RPP30 form the 'palm' subcomplex, and RPP21, POP4 and RPP38 form the 'wrist' subcomplex. All subunits of the RNase P complex interact with the catalytic RNA.

It is found in the nucleus. Its subcellular location is the nucleolus. In terms of biological role, component of ribonuclease P, a ribonucleoprotein complex that generates mature tRNA molecules by cleaving their 5'-ends. The protein is Ribonuclease P protein subunit p21 (Rpp21) of Mus musculus (Mouse).